A 246-amino-acid chain; its full sequence is Pyridoxine 5'-phosphate synthase (246 aa).

3-amino-2-oxopropyl phosphate is bound at residue Asn-7. 9 to 10 provides a ligand contact to 1-deoxy-D-xylulose 5-phosphate; that stretch reads DH. Arg-18 lines the 3-amino-2-oxopropyl phosphate pocket. His-43 functions as the Proton acceptor in the catalytic mechanism. The 1-deoxy-D-xylulose 5-phosphate site is built by Arg-45 and His-50. The Proton acceptor role is filled by Glu-70. Thr-100 contributes to the 1-deoxy-D-xylulose 5-phosphate binding site. His-190 functions as the Proton donor in the catalytic mechanism. 3-amino-2-oxopropyl phosphate-binding positions include Gly-191 and 212–213; that span reads GH.

This sequence belongs to the PNP synthase family. In terms of assembly, homooctamer; tetramer of dimers.

It localises to the cytoplasm. It catalyses the reaction 3-amino-2-oxopropyl phosphate + 1-deoxy-D-xylulose 5-phosphate = pyridoxine 5'-phosphate + phosphate + 2 H2O + H(+). It participates in cofactor biosynthesis; pyridoxine 5'-phosphate biosynthesis; pyridoxine 5'-phosphate from D-erythrose 4-phosphate: step 5/5. In terms of biological role, catalyzes the complicated ring closure reaction between the two acyclic compounds 1-deoxy-D-xylulose-5-phosphate (DXP) and 3-amino-2-oxopropyl phosphate (1-amino-acetone-3-phosphate or AAP) to form pyridoxine 5'-phosphate (PNP) and inorganic phosphate. This is Pyridoxine 5'-phosphate synthase from Prochlorococcus marinus (strain SARG / CCMP1375 / SS120).